The chain runs to 188 residues: MKTTKSFIIIWTFIGFLLNLLALFTPFELPLFDIADKTNTTYLRMGISFQVASNLFISCVSGATPAKYAQILYLIIGIFGEPLYMTGNSYDMTQDPSWGYVIGSFGASERAGEKAFEKKLSLLNILISSYSGLFVIHAYGAIGLLLHSKSWEHWKSYLIMYSLIPLPSQLVMIFLTSILAFLFRKILD.

It localises to the plastid. It is found in the cyanelle. This is an uncharacterized protein from Cyanophora paradoxa.